Consider the following 149-residue polypeptide: Transcriptional regulator MraZ (149 aa).

2 SpoVT-AbrB domains span residues 6-52 and 81-124; these read RSHR…PLPD and AELM…DQGR.

This sequence belongs to the MraZ family. As to quaternary structure, forms oligomers.

The protein resides in the cytoplasm. It localises to the nucleoid. This Nitratidesulfovibrio vulgaris (strain DSM 19637 / Miyazaki F) (Desulfovibrio vulgaris) protein is Transcriptional regulator MraZ.